The sequence spans 319 residues: tRNA-cytidine(32) 2-sulfurtransferase (319 aa).

The PP-loop motif signature appears at serine 49–serine 54. [4Fe-4S] cluster contacts are provided by cysteine 124, cysteine 127, and cysteine 215.

It belongs to the TtcA family. As to quaternary structure, homodimer. It depends on Mg(2+) as a cofactor. [4Fe-4S] cluster is required as a cofactor.

The protein resides in the cytoplasm. It catalyses the reaction cytidine(32) in tRNA + S-sulfanyl-L-cysteinyl-[cysteine desulfurase] + AH2 + ATP = 2-thiocytidine(32) in tRNA + L-cysteinyl-[cysteine desulfurase] + A + AMP + diphosphate + H(+). It functions in the pathway tRNA modification. In terms of biological role, catalyzes the ATP-dependent 2-thiolation of cytidine in position 32 of tRNA, to form 2-thiocytidine (s(2)C32). The sulfur atoms are provided by the cysteine/cysteine desulfurase (IscS) system. This is tRNA-cytidine(32) 2-sulfurtransferase from Shewanella amazonensis (strain ATCC BAA-1098 / SB2B).